The sequence spans 156 residues: uncharacterized protein (156 aa).

A run of 5 helical transmembrane segments spans residues 7 to 29 (AQISVVLSTIIIMTYAFLSSYFL), 42 to 64 (YFALSNLLSLSLPFVCAWFPYLF), 69 to 88 (AVTGSALSAFGLFLFFAITS), 98 to 120 (AAIWVIYFFWLIGAALAGVYPAL), and 133 to 155 (ALVLSALFTVVVSFIIGFLISRI).

It localises to the cell membrane. This is an uncharacterized protein from Pasteurella multocida (strain Pm70).